Reading from the N-terminus, the 259-residue chain is Type III pantothenate kinase (259 aa).

ATP is bound at residue 6 to 13 (DVGNTNCT). 107-110 (GSDR) contacts substrate. Catalysis depends on D109, which acts as the Proton acceptor. D129 contributes to the K(+) binding site. T132 provides a ligand contact to ATP. T184 contacts substrate.

Belongs to the type III pantothenate kinase family. In terms of assembly, homodimer. NH4(+) serves as cofactor. K(+) is required as a cofactor.

Its subcellular location is the cytoplasm. It carries out the reaction (R)-pantothenate + ATP = (R)-4'-phosphopantothenate + ADP + H(+). The protein operates within cofactor biosynthesis; coenzyme A biosynthesis; CoA from (R)-pantothenate: step 1/5. Functionally, catalyzes the phosphorylation of pantothenate (Pan), the first step in CoA biosynthesis. This chain is Type III pantothenate kinase, found in Listeria monocytogenes serotype 4b (strain CLIP80459).